The chain runs to 127 residues: uncharacterized protein (127 aa).

The span at Met-1 to Arg-13 shows a compositional bias: polar residues. The segment at Met-1–Pro-26 is disordered.

This is an uncharacterized protein from Saccharomyces cerevisiae (strain ATCC 204508 / S288c) (Baker's yeast).